Here is an 84-residue protein sequence, read N- to C-terminus: Exodeoxyribonuclease 7 small subunit (84 aa).

The protein belongs to the XseB family. As to quaternary structure, heterooligomer composed of large and small subunits.

The protein localises to the cytoplasm. It carries out the reaction Exonucleolytic cleavage in either 5'- to 3'- or 3'- to 5'-direction to yield nucleoside 5'-phosphates.. Bidirectionally degrades single-stranded DNA into large acid-insoluble oligonucleotides, which are then degraded further into small acid-soluble oligonucleotides. In Yersinia pseudotuberculosis serotype O:1b (strain IP 31758), this protein is Exodeoxyribonuclease 7 small subunit.